The primary structure comprises 326 residues: Adenosine receptor A1 (326 aa).

Over 1 to 10 the chain is Extracellular; the sequence is MPPSISAFQA. Residues 11–33 form a helical membrane-spanning segment; it reads AYIGIEVLIALVSVPGNVLVIWA. At 34–46 the chain is on the cytoplasmic side; it reads VKVNQALRDATFC. The helical transmembrane segment at 47-69 threads the bilayer; it reads FIVSLAVADVAVGALVIPLAILI. Topologically, residues 70–80 are extracellular; the sequence is NIGPRTYFHTC. A disulfide bridge links C80 with C169. A helical membrane pass occupies residues 81 to 102; the sequence is LKVACPVLILTQSSILALLAIA. Over 103-123 the chain is Cytoplasmic; it reads VDRYLRVKIPLRYKTVVTPRR. Residues 124–146 form a helical membrane-spanning segment; it reads AVVAITGCWILSFVVGLTPMFGW. The Extracellular portion of the chain corresponds to 147–176; sequence NNLSAVERDWLANGSVGEPVIECQFEKVIS. N-linked (GlcNAc...) asparagine glycosylation is found at N148 and N159. Residues 177–201 traverse the membrane as a helical segment; the sequence is MEYMVYFNFFVWVLPPLLLMVLIYM. Residues 202–235 lie on the Cytoplasmic side of the membrane; it reads EVFYLIRKQLNKKVSASSGDPQKYYGKELKIAKS. A helical membrane pass occupies residues 236–259; sequence LALILFLFALSWLPLHILNCITLF. The Extracellular portion of the chain corresponds to 260–267; sequence CPSCHMPR. A helical transmembrane segment spans residues 268–292; that stretch reads ILIYIAIFLSHGNSAMNPIVYAFRI. Topologically, residues 293–326 are cytoplasmic; that stretch reads QKFRVTFLKIWNDHFRCQPAPPVDEDAPAERPDD. The S-palmitoyl cysteine moiety is linked to residue C309.

This sequence belongs to the G-protein coupled receptor 1 family.

The protein localises to the cell membrane. In terms of biological role, receptor for adenosine. The activity of this receptor is mediated by G proteins which inhibit adenylyl cyclase. The chain is Adenosine receptor A1 (ADORA1) from Bos taurus (Bovine).